Consider the following 549-residue polypeptide: Cilia- and flagella-associated protein 45 (549 aa).

Positions 1 to 29 are disordered; the sequence is MPLSPAGVLSSTSTASNRSRNRPRYRTKA. Coiled-coil stretches lie at residues 119–232, 259–393, and 434–522; these read REEL…MMEV, IVEQ…KRNQ, and AVQV…KIEE. Residues 388–416 form a disordered region; that stretch reads RAKRNQEVADREWRRKEKENAQKKMETEA.

It belongs to the CFAP45 family. Microtubule inner protein component of sperm flagellar doublet microtubules. Interacts with AK8; dimerization with AK8 may create a cavity at the interface of the dimer that can accommodate AMP. Interacts with CFAP52. Interacts with ENKUR. Directly interacts with DNALI1. Interacts with DNAH11. Interacts with DNAI1. In terms of tissue distribution, expressed in respiratory cells (at protein level).

It is found in the cytoplasm. The protein resides in the cytoskeleton. It localises to the cilium axoneme. Its subcellular location is the flagellum axoneme. The protein localises to the cell projection. It is found in the cilium. The protein resides in the flagellum. Its function is as follows. Microtubule inner protein (MIP) part of the dynein-decorated doublet microtubules (DMTs) in cilia axoneme, which is required for motile cilia beating. It is an AMP-binding protein that may facilitate dynein ATPase-dependent ciliary and flagellar beating via adenine nucleotide homeostasis. May function as a donor of AMP to AK8 and hence promote ADP production. This chain is Cilia- and flagella-associated protein 45 (CFAP45), found in Sus scrofa (Pig).